The primary structure comprises 156 residues: dCTP deaminase (156 aa).

Residues 79–84 (RSTFAR), Asp-95, Gln-124, and Tyr-138 contribute to the dCTP site.

This sequence belongs to the dCTP deaminase family. Homotrimer.

The catalysed reaction is dCTP + H2O + H(+) = dUTP + NH4(+). It participates in pyrimidine metabolism; dUMP biosynthesis; dUMP from dCTP (dUTP route): step 1/2. Its function is as follows. Catalyzes the deamination of dCTP to dUTP. The protein is dCTP deaminase of Thermococcus sibiricus (strain DSM 12597 / MM 739).